The sequence spans 259 residues: Acyl-[acyl-carrier-protein]--UDP-N-acetylglucosamine O-acyltransferase (259 aa).

Belongs to the transferase hexapeptide repeat family. LpxA subfamily. In terms of assembly, homotrimer.

It localises to the cytoplasm. It catalyses the reaction a (3R)-hydroxyacyl-[ACP] + UDP-N-acetyl-alpha-D-glucosamine = a UDP-3-O-[(3R)-3-hydroxyacyl]-N-acetyl-alpha-D-glucosamine + holo-[ACP]. It participates in glycolipid biosynthesis; lipid IV(A) biosynthesis; lipid IV(A) from (3R)-3-hydroxytetradecanoyl-[acyl-carrier-protein] and UDP-N-acetyl-alpha-D-glucosamine: step 1/6. Functionally, involved in the biosynthesis of lipid A, a phosphorylated glycolipid that anchors the lipopolysaccharide to the outer membrane of the cell. The sequence is that of Acyl-[acyl-carrier-protein]--UDP-N-acetylglucosamine O-acyltransferase from Akkermansia muciniphila (strain ATCC BAA-835 / DSM 22959 / JCM 33894 / BCRC 81048 / CCUG 64013 / CIP 107961 / Muc).